A 305-amino-acid chain; its full sequence is Oxygen-dependent coproporphyrinogen-III oxidase (305 aa).

S99 is a substrate binding site. A divalent metal cation contacts are provided by H103 and H113. H113 functions as the Proton donor in the catalytic mechanism. N115–R117 contributes to the substrate binding site. Residues H152 and H182 each contribute to the a divalent metal cation site. The tract at residues Y247 to E282 is important for dimerization. G265–R267 is a substrate binding site.

The protein belongs to the aerobic coproporphyrinogen-III oxidase family. Homodimer. A divalent metal cation serves as cofactor.

The protein localises to the cytoplasm. It catalyses the reaction coproporphyrinogen III + O2 + 2 H(+) = protoporphyrinogen IX + 2 CO2 + 2 H2O. The protein operates within porphyrin-containing compound metabolism; protoporphyrin-IX biosynthesis; protoporphyrinogen-IX from coproporphyrinogen-III (O2 route): step 1/1. Functionally, involved in the heme biosynthesis. Catalyzes the aerobic oxidative decarboxylation of propionate groups of rings A and B of coproporphyrinogen-III to yield the vinyl groups in protoporphyrinogen-IX. This is Oxygen-dependent coproporphyrinogen-III oxidase from Vibrio cholerae serotype O1 (strain M66-2).